The chain runs to 398 residues: Fe-regulated protein 8 (398 aa).

Protein of unknown function; part of the gene cluster that mediates the biosynthesis of siderophore ferrichrome A which is contributing to organismal virulence. This is Fe-regulated protein 8 from Mycosarcoma maydis (Corn smut fungus).